The sequence spans 374 residues: tRNA-specific 2-thiouridylase MnmA (374 aa).

Residues 17 to 24 and M43 contribute to the ATP site; that span reads GMSGGVDS. The segment at 103-105 is interaction with target base in tRNA; sequence NPD. The Nucleophile role is filled by C108. A disulfide bridge links C108 with C204. G132 lines the ATP pocket. The segment at 154–156 is interaction with tRNA; that stretch reads KDQ. C204 serves as the catalytic Cysteine persulfide intermediate. The interaction with tRNA stretch occupies residues 316–317; sequence RY.

It belongs to the MnmA/TRMU family.

The protein resides in the cytoplasm. The enzyme catalyses S-sulfanyl-L-cysteinyl-[protein] + uridine(34) in tRNA + AH2 + ATP = 2-thiouridine(34) in tRNA + L-cysteinyl-[protein] + A + AMP + diphosphate + H(+). In terms of biological role, catalyzes the 2-thiolation of uridine at the wobble position (U34) of tRNA, leading to the formation of s(2)U34. The polypeptide is tRNA-specific 2-thiouridylase MnmA (Pseudomonas fluorescens (strain SBW25)).